We begin with the raw amino-acid sequence, 73 residues long: Large ribosomal subunit protein bL31 (73 aa).

Zn(2+) is bound by residues Cys16, Cys18, Cys38, and Cys41.

This sequence belongs to the bacterial ribosomal protein bL31 family. Type A subfamily. In terms of assembly, part of the 50S ribosomal subunit. The cofactor is Zn(2+).

Binds the 23S rRNA. The chain is Large ribosomal subunit protein bL31 from Streptomyces avermitilis (strain ATCC 31267 / DSM 46492 / JCM 5070 / NBRC 14893 / NCIMB 12804 / NRRL 8165 / MA-4680).